The chain runs to 379 residues: Sialidase-2 (379 aa).

The short motif at tyrosine 20 to proline 23 is the FRIP motif element. Substrate is bound by residues arginine 21 and arginine 41. Residue aspartate 46 is the Proton acceptor of the active site. The BNR 1 repeat unit spans residues valine 127–proline 138. 2 residues coordinate substrate: tyrosine 179 and tyrosine 181. The BNR 2 repeat unit spans residues phenylalanine 197–leucine 208. Positions 218, 237, and 303 each coordinate substrate. Residue arginine 303 is part of the active site. The Nucleophile role is filled by tyrosine 333. Glutamate 354 is a catalytic residue.

It belongs to the glycosyl hydrolase 33 family. As to expression, highly expressed in heart.

The protein localises to the cytoplasm. It localises to the cytosol. It catalyses the reaction Hydrolysis of alpha-(2-&gt;3)-, alpha-(2-&gt;6)-, alpha-(2-&gt;8)- glycosidic linkages of terminal sialic acid residues in oligosaccharides, glycoproteins, glycolipids, colominic acid and synthetic substrates.. It carries out the reaction a ganglioside GD1a + H2O = a ganglioside GM1 + N-acetylneuraminate. The catalysed reaction is a ganglioside GM1 + H2O = a ganglioside GA1 + N-acetylneuraminate. The enzyme catalyses a ganglioside GT1b + H2O = a ganglioside GD1b + N-acetylneuraminate. It catalyses the reaction a ganglioside GD1b + H2O = a ganglioside GM1 + N-acetylneuraminate. It carries out the reaction a ganglioside GD3 + H2O = a ganglioside GM3 + N-acetylneuraminate. The catalysed reaction is a ganglioside GM3 + H2O = a beta-D-galactosyl-(1-&gt;4)-beta-D-glucosyl-(1&lt;-&gt;1)-ceramide + N-acetylneuraminate. The enzyme catalyses a ganglioside GM2 + H2O = a ganglioside GA2 + N-acetylneuraminate. It catalyses the reaction a neolactoside IV(3)-alpha-NeuAc-nLc4Cer(d18:1(4E)) + H2O = a neolactoside nLc4Cer(d18:1(4E)) + N-acetylneuraminate. It carries out the reaction N-acetyl-alpha-neuraminosyl-(2-&gt;3)-beta-D-galactosyl-(1-&gt;4)-D-glucose + H2O = lactose + N-acetylneuraminate. In terms of biological role, exo-alpha-sialidase that catalyzes the hydrolytic cleavage of the terminal sialic acid (N-acetylneuraminic acid, Neu5Ac) of a glycan moiety in the catabolism of glycolipids, glycoproteins and oligosacharides. Recognizes sialyl linkage positions of the glycan moiety as well as the supramolecular organization of the sialoglycoconjugate. Displays preference for alpha-(2-&gt;3)-sialylated GD1a and GT1B gangliosides over alpha-(2-&gt;8)-sialylated GD1b, in both monomeric forms and micelles. Hydrolyzes exclusively monomeric GM1 ganglioside, but has no activity toward the miscellar form. Has lower sialidase activity for glycoproteins such as fetuin and TF/transferrin that carry a mixture of alpha-(2-&gt;3) and alpha-(2-&gt;6)-sialyl linkages. Cleaves milk oligosaccharide alpha-(2-&gt;3)-sialyllactose, but is inactive toward isomer alpha-(2-&gt;6)-sialyllactose isomer. Has no activity toward colominic acid, a homomer of alpha-(2-&gt;8)-linked Neu5Ac residues. The polypeptide is Sialidase-2 (Neu2) (Mus musculus (Mouse)).